The primary structure comprises 132 residues: Small ribosomal subunit protein uS8 (132 aa).

The protein belongs to the universal ribosomal protein uS8 family. Part of the 30S ribosomal subunit. Contacts proteins S5 and S12.

One of the primary rRNA binding proteins, it binds directly to 16S rRNA central domain where it helps coordinate assembly of the platform of the 30S subunit. In Baumannia cicadellinicola subsp. Homalodisca coagulata, this protein is Small ribosomal subunit protein uS8.